The sequence spans 219 residues: MNRHVIIVAGGKGLRMGGDIPKQFLPVGGKPVLMRTIEAFYAFDSSMHIILVLPVSQQAYWKDLCETYHFALRHDIADGGETRFHSVKNGLAYVKGEGLVGVHDGVRPFVSREVIAGCYEAAQTKQAVIPVIDVVETVRHLTKPGSETVPRNDYKLVQTPQVFEVQLLKEAYQQEYTDAFTDDASVVEAMGREVCLVQGNRENIKLTTPFDLKIAEVLI.

Belongs to the IspD/TarI cytidylyltransferase family. IspD subfamily.

The catalysed reaction is 2-C-methyl-D-erythritol 4-phosphate + CTP + H(+) = 4-CDP-2-C-methyl-D-erythritol + diphosphate. Its pathway is isoprenoid biosynthesis; isopentenyl diphosphate biosynthesis via DXP pathway; isopentenyl diphosphate from 1-deoxy-D-xylulose 5-phosphate: step 2/6. Functionally, catalyzes the formation of 4-diphosphocytidyl-2-C-methyl-D-erythritol from CTP and 2-C-methyl-D-erythritol 4-phosphate (MEP). The polypeptide is 2-C-methyl-D-erythritol 4-phosphate cytidylyltransferase (Phocaeicola vulgatus (strain ATCC 8482 / DSM 1447 / JCM 5826 / CCUG 4940 / NBRC 14291 / NCTC 11154) (Bacteroides vulgatus)).